The primary structure comprises 193 residues: Phosphoheptose isomerase (193 aa).

The region spanning 37-193 (LADSFKAGGK…MLIEKEMAKG (157 aa)) is the SIS domain. Substrate is bound at residue 52 to 54 (NGG). H61 and E65 together coordinate Zn(2+). Residues E65, 93-94 (ND), 119-121 (STS), S124, and Q172 each bind substrate. 2 residues coordinate Zn(2+): Q172 and H180.

This sequence belongs to the SIS family. GmhA subfamily. In terms of assembly, homotetramer. Requires Zn(2+) as cofactor.

Its subcellular location is the cytoplasm. The catalysed reaction is 2 D-sedoheptulose 7-phosphate = D-glycero-alpha-D-manno-heptose 7-phosphate + D-glycero-beta-D-manno-heptose 7-phosphate. It participates in carbohydrate biosynthesis; D-glycero-D-manno-heptose 7-phosphate biosynthesis; D-glycero-alpha-D-manno-heptose 7-phosphate and D-glycero-beta-D-manno-heptose 7-phosphate from sedoheptulose 7-phosphate: step 1/1. Functionally, catalyzes the isomerization of sedoheptulose 7-phosphate in D-glycero-D-manno-heptose 7-phosphate. This chain is Phosphoheptose isomerase, found in Klebsiella pneumoniae subsp. pneumoniae (strain ATCC 700721 / MGH 78578).